The chain runs to 322 residues: MKEACSSSSHVPVSDSKYILKSELLSLLKTYNCYHEGRSFQLRHREEEGTLIIEGLLNIAWGLRRPIRLQMQDDRERVHLPSATWVPERLSYLQKEASPQDSKVPTEEPGTQPANKAEVSGDSSGALEGEEEEVPQLMRTKSDASCIIQRRSKSRAPSEAQKIRRHRFSINGHFYNHKTSVFTPAYGSVTNVRVNSTMTTQQVLTLLLNKFRVEDGPSEFALYTVHESGEQTKLKDCEYPLISRILHGPCEKIVKIFLMEADLSEEVPHDVAQYIKFEMPVLDSFVEKLKEEEEREIIKLTMKFQALRLTMLQRLEQLVEAK.

The interval 96–161 (EASPQDSKVP…SKSRAPSEAQ (66 aa)) is disordered. Phosphoserine is present on serine 142. The Ras-associating domain occupies 175 to 264 (YNHKTSVFTP…KIFLMEADLS (90 aa)). The 48-residue stretch at 271-318 (VAQYIKFEMPVLDSFVEKLKEEEEREIIKLTMKFQALRLTMLQRLEQL) folds into the SARAH domain.

As to quaternary structure, interacts directly with activated KRAS in a GTP-dependent manner.

Its function is as follows. Potential tumor suppressor. May act as a KRAS effector protein. May promote apoptosis and cell cycle arrest. The protein is Ras association domain-containing protein 4 (Rassf4) of Mus musculus (Mouse).